The following is a 504-amino-acid chain: tRNA (uracil-5-)-methyltransferase homolog B (504 aa).

A mitochondrion-targeting transit peptide spans 1–16 (MAGLKRRVPLHSLRYF). S-adenosyl-L-methionine is bound by residues Gln-323, Glu-373, and Asn-423. The active-site Nucleophile is the Cys-451. Glu-497 acts as the Proton acceptor in catalysis.

Belongs to the class I-like SAM-binding methyltransferase superfamily. RNA M5U methyltransferase family.

The protein resides in the mitochondrion. The protein localises to the mitochondrion matrix. The enzyme catalyses uridine(54) in tRNA + S-adenosyl-L-methionine = 5-methyluridine(54) in tRNA + S-adenosyl-L-homocysteine + H(+). It catalyses the reaction a uridine in 12S rRNA + S-adenosyl-L-methionine = a 5-methyluridine in 12S rRNA + S-adenosyl-L-homocysteine + H(+). Its function is as follows. Mitochondrial S-adenosyl-L-methionine-dependent methyltransferase that catalyzes the formation of 5-methyl-uridine in tRNAs and 12S rRNA. Catalyzes the methylation of uridine at position 54 (m5U54) in all tRNAs. Specifically methylates the uridine in position 429 of 12S rRNA (m5U429). Does not affect RNA stability or mitochondrial translation. The chain is tRNA (uracil-5-)-methyltransferase homolog B from Homo sapiens (Human).